Reading from the N-terminus, the 168-residue chain is HTH-type transcriptional regulator IscR (168 aa).

One can recognise an HTH rrf2-type domain in the interval 2–131; it reads KLTSKGRYAV…NNITLGELMT (130 aa). The segment at residues 28–51 is a DNA-binding region (H-T-H motif); sequence LADISERQGISLSYLEQLFSKLRK. Cys92, Cys98, and Cys104 together coordinate [2Fe-2S] cluster.

[2Fe-2S] cluster is required as a cofactor.

Regulates the transcription of several operons and genes involved in the biogenesis of Fe-S clusters and Fe-S-containing proteins. This chain is HTH-type transcriptional regulator IscR, found in Vibrio parahaemolyticus serotype O3:K6 (strain RIMD 2210633).